We begin with the raw amino-acid sequence, 99 residues long: Single insulin-like growth factor-binding domain protein-2 (99 aa).

A signal peptide spans 1–18 (MESLFIFAFGMMLSSASA). Positions 19-98 (LSCIPCVPEE…GQEVGRCRKK (80 aa)) constitute an IGFBP N-terminal domain. O-linked (GalNAc...) serine glycosylation is present at serine 20. Intrachain disulfides connect cysteine 21–cysteine 44, cysteine 24–cysteine 46, cysteine 29–cysteine 47, cysteine 35–cysteine 50, cysteine 58–cysteine 74, and cysteine 68–cysteine 95.

Expressed in hemocytes.

The protein resides in the secreted. Has a role in the innate immune system. The sequence is that of Single insulin-like growth factor-binding domain protein-2 from Cupiennius salei (American wandering spider).